A 92-amino-acid chain; its full sequence is Small ribosomal subunit protein uS19 (92 aa).

The protein belongs to the universal ribosomal protein uS19 family.

Its function is as follows. Protein S19 forms a complex with S13 that binds strongly to the 16S ribosomal RNA. In Jannaschia sp. (strain CCS1), this protein is Small ribosomal subunit protein uS19.